Consider the following 264-residue polypeptide: uncharacterized protein (264 aa).

The ABC transporter domain occupies 3–243 (LQLDNVSLKR…QILSAFFDTP (241 aa)). Residue 35 to 42 (GLNGAGKT) coordinates ATP.

The protein belongs to the ABC transporter superfamily.

This is an uncharacterized protein from Bacillus subtilis (strain 168).